The chain runs to 175 residues: MAAGAAAALAFLNQESRARAGGVGGLRVPAPVTMDSFFFGCELSGHTRSFTFKVEEEDDTEHVLALNMLCLTEGATDECNVVEVVARDHDNQEIAVPVANLRLSCQPMLSVDDFQLQPPVTFRLKSGSGPVRITGRHQIVCINNDLSEEESDDESEEDEIKLCGILPAKKHRGRP.

Alanine 2 bears the N-acetylalanine mark. A Phosphoserine modification is found at serine 16. Arginine 27 carries the omega-N-methylarginine modification. Phosphoserine is present on residues serine 147 and serine 151.

This sequence belongs to the nucleoplasmin family. In terms of assembly, interacts with NPM (via N-terminus). Forms a pentamer with NPM at a ratio 4:1 (NPM3/NPM). Two pentamers form a decamer. In terms of processing, phosphorylated. In terms of tissue distribution, predominantly expressed in testis.

It is found in the nucleus. Its subcellular location is the nucleolus. Its function is as follows. Plays a role in the regulation of diverse cellular processes such as ribosome biogenesis, chromatin remodeling or protein chaperoning. Modulates the histone chaperone function and the RNA-binding activity of nucleolar phosphoprotein B23/NPM. Efficiently mediates chromatin remodeling when included in a pentamer containing NPM3 and NPM. The sequence is that of Nucleoplasmin-3 (Npm3) from Mus musculus (Mouse).